Consider the following 352-residue polypeptide: Large ribosomal subunit protein uL5m (352 aa).

Residues 28–109 (STQTGAGAAA…HPIQSPPSSD (82 aa)) are disordered. A compositionally biased stretch (basic and acidic residues) spans 63–80 (EEDKKEFRPWKRAADRKA).

It belongs to the universal ribosomal protein uL5 family. In terms of assembly, component of the mitochondrial large ribosomal subunit (mt-LSU). Mature N.crassa 74S mitochondrial ribosomes consist of a small (37S) and a large (54S) subunit. The 37S small subunit contains a 16S ribosomal RNA (16S mt-rRNA) and 32 different proteins. The 54S large subunit contains a 23S rRNA (23S mt-rRNA) and 42 different proteins. Unlike bacterial L5, uL5m does not bind zinc.

The protein localises to the mitochondrion. In terms of biological role, component of the mitochondrial ribosome (mitoribosome), a dedicated translation machinery responsible for the synthesis of mitochondrial genome-encoded proteins, including at least some of the essential transmembrane subunits of the mitochondrial respiratory chain. The mitoribosomes are attached to the mitochondrial inner membrane and translation products are cotranslationally integrated into the membrane. This is Large ribosomal subunit protein uL5m (mrpl7) from Neurospora crassa (strain ATCC 24698 / 74-OR23-1A / CBS 708.71 / DSM 1257 / FGSC 987).